A 117-amino-acid chain; its full sequence is Large ribosomal subunit protein uL18 (117 aa).

Belongs to the universal ribosomal protein uL18 family. In terms of assembly, part of the 50S ribosomal subunit; part of the 5S rRNA/L5/L18/L25 subcomplex. Contacts the 5S and 23S rRNAs.

This is one of the proteins that bind and probably mediate the attachment of the 5S RNA into the large ribosomal subunit, where it forms part of the central protuberance. This Coxiella burnetii (strain CbuK_Q154) (Coxiella burnetii (strain Q154)) protein is Large ribosomal subunit protein uL18.